A 68-amino-acid chain; its full sequence is Large ribosomal subunit protein bL35 (68 aa).

Composition is skewed to basic residues over residues 1–15 and 23–38; these read MPKM…KRFK and TARK…HKSS. The segment at 1–38 is disordered; it reads MPKMKSHSGTKKRFKVTGSGKVTARKAGKRHLNEHKSS.

The protein belongs to the bacterial ribosomal protein bL35 family.

The protein is Large ribosomal subunit protein bL35 of Cutibacterium acnes (strain DSM 16379 / KPA171202) (Propionibacterium acnes).